The chain runs to 211 residues: Adenylyl-sulfate kinase (211 aa).

ATP is bound at residue 32–39 (GLSASGKS). Serine 107 acts as the Phosphoserine intermediate in catalysis.

Belongs to the APS kinase family. In terms of assembly, homodimer.

It carries out the reaction adenosine 5'-phosphosulfate + ATP = 3'-phosphoadenylyl sulfate + ADP + H(+). Its pathway is sulfur metabolism; hydrogen sulfide biosynthesis; sulfite from sulfate: step 2/3. In terms of biological role, catalyzes the synthesis of activated sulfate. This is Adenylyl-sulfate kinase from Penicillium chrysogenum (Penicillium notatum).